Reading from the N-terminus, the 605-residue chain is Golgi-associated RAB2 interactor protein 3 (605 aa).

Disordered stretches follow at residues 234 to 265 (GEGI…AART) and 407 to 529 (YMSE…ALQK). Residues 239–265 (HASHGTASAASPSTSTPGAAEGGAART) are compositionally biased toward low complexity. Residues 434–457 (KKDRHPSRKSSHHRKAGESHRRRA) show a composition bias toward basic residues. A Bipartite nuclear localization signal motif is present at residues 441-458 (RKSSHHRKAGESHRRRAG). The segment covering 463-473 (KASSHRSASGH) has biased composition (polar residues). Residues 475–484 (NTRDDKKEKG) show a composition bias toward basic and acidic residues. A compositionally biased stretch (basic residues) spans 489 to 500 (RGKRHGSSRKSS). Positions 513 to 526 (QELGKNQSASSTGA) are enriched in polar residues. Residue Ser592 is modified to Phosphoserine.

This sequence belongs to the GARIN family. In terms of assembly, interacts (via N-terminus) with RAB2B (in GTP-bound form). Interacts with FRG1. In terms of tissue distribution, expressed in adult spermatocytes and spermatids (at protein level).

Its subcellular location is the golgi apparatus. It localises to the nucleus. The protein resides in the cajal body. Functionally, may be involved in RNA biogenesis. The protein is Golgi-associated RAB2 interactor protein 3 of Homo sapiens (Human).